We begin with the raw amino-acid sequence, 1337 residues long: Protein cordon-bleu (1337 aa).

Positions 1–41 (MDAPRALAAKPPTGRKMKARAPPPPGKPAAQNVHSEQKLPH) are disordered. A phosphoserine mark is found at serine 47, serine 50, serine 212, serine 235, serine 272, and serine 294. Disordered regions lie at residues 260–556 (SKAE…NDDE) and 647–768 (IASQ…HHGQ). Residues 288–317 (CVTTPNSPSLHSRSLTLGPSLSLGNISGVS) are compositionally biased toward polar residues. The KKRRAP 1 signature appears at 323–328 (KKRRAP). Serine 346 and serine 349 each carry phosphoserine. A KKRRAP 2 motif is present at residues 356–361 (KKRRAP). Residues 361-374 (PAPPPPQQPPPSPV) show a composition bias toward pro residues. Serine 372 is modified (phosphoserine). The span at 377 to 387 (NRKEDKEENRK) shows a compositional bias: basic and acidic residues. The span at 411–423 (LVLPPPPPYPPPD) shows a compositional bias: pro residues. The segment covering 469–480 (ESEETASEDTTE) has biased composition (acidic residues). The segment covering 484-500 (VMSSPSDAISLDSQQDS) has biased composition (polar residues). Threonine 522 carries the phosphothreonine modification. Positions 526–541 (GPQKSPSWGKSGSGSS) are enriched in low complexity. Composition is skewed to polar residues over residues 647–666 (IASQRSHLSPSQTEHSQPFV) and 687–710 (QPTLANTSENENPVETDPTVTSLV). Residue serine 649 is modified to Phosphoserine. Residues 714–736 (LIDDPKAKDKGKVHGSSHSEKTQ) are compositionally biased toward basic and acidic residues. The residue at position 816 (serine 816) is a Phosphoserine. 2 disordered regions span residues 892-923 (TPQQQPASQEYGAHLEEERSRPQSAVSCSVKV) and 967-991 (KATTEQCHEEAKLARSPPTRKDDAA). The residue at position 1038 (serine 1038) is a Phosphoserine. Polar residues predominate over residues 1070 to 1090 (GFNEKQTTSNQKANSTSNFSQ). 4 disordered regions span residues 1070–1094 (GFNEKQTTSNQKANSTSNFSQALDK), 1113–1133 (MNGSARTPGNCEPPHSPKEST), 1145–1168 (KPSSLSTDGQDADDTLPSSIFGPK), and 1192–1221 (AIHSSGGREKLRKTAEQTSEGRPKKPSYVE). Serine 1128 carries the phosphoserine modification. 2 consecutive WH2 domains span residues 1185-1205 (LHSALMEAIHSSGGREKLRKT) and 1225-1245 (ERSALLAAIRGHSGTLSLRKV). Over residues 1197 to 1214 (GGREKLRKTAEQTSEGRP) the composition is skewed to basic and acidic residues. Residues 1262 to 1310 (GAPGLDKPQQEDLGLPPPPALPPPPAPAPQAPSASVTVSRFSTGTPSNS) form a disordered region. Residues 1276–1291 (LPPPPALPPPPAPAPQ) are compositionally biased toward pro residues. Positions 1297-1310 (VTVSRFSTGTPSNS) are enriched in polar residues. Residue serine 1303 is modified to Phosphoserine. Residues 1313–1333 (ARQALMDAIRSGTGAARLRKV) enclose the WH2 3 domain.

In terms of assembly, identified in a complex composed of COBL, PACSIN1 and WASL. Interacts with PACSIN1, PACSIN2 and PACSIN3. Identified in a complex composed of ACTA1, COBL, GSN and TMSB4X. Interacts (via WH2 domains) with actin monomers. Interacts with DBNL. Detected in brain cortex and in the Purkinje cell layer in the cerebellum. Detected in hippocampus neurons, and at lower levels in testis, lung and spleen (at protein level). Detected in embryonic neural tube.

Its subcellular location is the cell membrane. The protein resides in the cytoplasm. The protein localises to the cytoskeleton. It localises to the cell projection. It is found in the ruffle. Its function is as follows. Plays an important role in the reorganization of the actin cytoskeleton. Binds to and sequesters actin monomers (G actin). Nucleates actin polymerization by assembling three actin monomers in cross-filament orientation and thereby promotes growth of actin filaments at the barbed end. Can also mediate actin depolymerization at barbed ends and severing of actin filaments. Promotes formation of cell ruffles. Regulates neuron morphogenesis and increases branching of axons and dendrites. Regulates dendrite branching in Purkinje cells. This chain is Protein cordon-bleu (Cobl), found in Mus musculus (Mouse).